A 514-amino-acid chain; its full sequence is Transmembrane protein 151B (514 aa).

Residues 1–40 (MSAEGEPAEAVAETPANSPGEEAAAAAATTDVDVREEQRP) are disordered. The next 3 membrane-spanning stretches (helical) occupy residues 57–77 (CLLL…CQVT), 104–124 (YVYI…VECW), and 286–306 (PWYV…SWPL).

Belongs to the TMEM151 family.

The protein localises to the membrane. In Xenopus tropicalis (Western clawed frog), this protein is Transmembrane protein 151B (tmem151b).